A 305-amino-acid chain; its full sequence is Uridylate cyclase (305 aa).

Residues D58 and D102 each coordinate Mn(2+).

It belongs to the adenylyl cyclase class-4/guanylyl cyclase family. Pyrimidine cyclase subfamily. In terms of assembly, homodimer. The cofactor is Mn(2+).

It localises to the cytoplasm. The enzyme catalyses GTP = 3',5'-cyclic GMP + diphosphate. The catalysed reaction is UTP = 3',5'-cyclic UMP + diphosphate. Functionally, pycsar (pyrimidine cyclase system for antiphage resistance) provides immunity against bacteriophage. The pyrimidine cyclase (PycC) synthesizes cyclic nucleotides in response to infection; these serve as specific second messenger signals. The signals activate the adjacent effector, leading to bacterial cell death and abortive phage infection. A clade D Pycsar system. In terms of biological role, the pyrimidine cyclase gene of a two-gene Pycsar system, generates cyclic UMP (cUMP) from UTP as well as cGMP from GTP to a lesser extent, has little to no activity on ATP or CTP. Expression of this and adjacent effector MePycTM (AC A0A1C5G2D0) probably confers resistance to bacteriophage. The genes are probably only expressed in response to bacteriophage infection. This chain is Uridylate cyclase, found in Micromonospora echinofusca.